A 142-amino-acid polypeptide reads, in one-letter code: Fluoride-specific ion channel FluC 1 (142 aa).

A run of 4 helical transmembrane segments spans residues 17 to 37 (AWVS…GLAL), 42 to 62 (GFPF…GFYA), 80 to 100 (FVMT…LETF), and 109 to 129 (YIAL…VWLG). 2 residues coordinate Na(+): Gly-87 and Thr-90.

Belongs to the fluoride channel Fluc/FEX (TC 1.A.43) family.

It is found in the cell inner membrane. The enzyme catalyses fluoride(in) = fluoride(out). Na(+) is not transported, but it plays an essential structural role and its presence is essential for fluoride channel function. Functionally, fluoride-specific ion channel. Important for reducing fluoride concentration in the cell, thus reducing its toxicity. The protein is Fluoride-specific ion channel FluC 1 of Bradyrhizobium diazoefficiens (strain JCM 10833 / BCRC 13528 / IAM 13628 / NBRC 14792 / USDA 110).